Reading from the N-terminus, the 258-residue chain is Ribosomal RNA small subunit methyltransferase A (258 aa).

S-adenosyl-L-methionine contacts are provided by H13, L15, G41, D63, D87, and N106.

This sequence belongs to the class I-like SAM-binding methyltransferase superfamily. rRNA adenine N(6)-methyltransferase family. RsmA subfamily.

The protein localises to the cytoplasm. The catalysed reaction is adenosine(1518)/adenosine(1519) in 16S rRNA + 4 S-adenosyl-L-methionine = N(6)-dimethyladenosine(1518)/N(6)-dimethyladenosine(1519) in 16S rRNA + 4 S-adenosyl-L-homocysteine + 4 H(+). Its function is as follows. Specifically dimethylates two adjacent adenosines (A1518 and A1519) in the loop of a conserved hairpin near the 3'-end of 16S rRNA in the 30S particle. May play a critical role in biogenesis of 30S subunits. The chain is Ribosomal RNA small subunit methyltransferase A from Cytophaga hutchinsonii (strain ATCC 33406 / DSM 1761 / CIP 103989 / NBRC 15051 / NCIMB 9469 / D465).